We begin with the raw amino-acid sequence, 392 residues long: Phosphopentomutase (392 aa).

Residues Asp-13, Asp-286, His-291, Asp-327, His-328, and His-339 each coordinate Mn(2+).

Belongs to the phosphopentomutase family. Mn(2+) serves as cofactor.

It localises to the cytoplasm. It catalyses the reaction 2-deoxy-alpha-D-ribose 1-phosphate = 2-deoxy-D-ribose 5-phosphate. The enzyme catalyses alpha-D-ribose 1-phosphate = D-ribose 5-phosphate. The protein operates within carbohydrate degradation; 2-deoxy-D-ribose 1-phosphate degradation; D-glyceraldehyde 3-phosphate and acetaldehyde from 2-deoxy-alpha-D-ribose 1-phosphate: step 1/2. In terms of biological role, isomerase that catalyzes the conversion of deoxy-ribose 1-phosphate (dRib-1-P) and ribose 1-phosphate (Rib-1-P) to deoxy-ribose 5-phosphate (dRib-5-P) and ribose 5-phosphate (Rib-5-P), respectively. This Oceanobacillus iheyensis (strain DSM 14371 / CIP 107618 / JCM 11309 / KCTC 3954 / HTE831) protein is Phosphopentomutase.